A 158-amino-acid polypeptide reads, in one-letter code: Flagellar assembly factor FliW (158 aa).

This sequence belongs to the FliW family. As to quaternary structure, interacts with translational regulator CsrA and flagellin(s).

The protein localises to the cytoplasm. Functionally, acts as an anti-CsrA protein, binds CsrA and prevents it from repressing translation of its target genes, one of which is flagellin. Binds to flagellin and participates in the assembly of the flagellum. This Syntrophus aciditrophicus (strain SB) protein is Flagellar assembly factor FliW.